Consider the following 233-residue polypeptide: Small ribosomal subunit protein uS3 (233 aa).

The KH type-2 domain occupies 39–107 (VRQFLTKELS…PAQINIAEVR (69 aa)).

This sequence belongs to the universal ribosomal protein uS3 family. In terms of assembly, part of the 30S ribosomal subunit. Forms a tight complex with proteins S10 and S14.

Functionally, binds the lower part of the 30S subunit head. Binds mRNA in the 70S ribosome, positioning it for translation. In Vibrio vulnificus (strain CMCP6), this protein is Small ribosomal subunit protein uS3.